The primary structure comprises 314 residues: Oxaloacetate tautomerase FAHD2B, mitochondrial (314 aa).

A mitochondrion-targeting transit peptide spans 1-84 (MLVSGRRRLL…ATLSVARRAL (84 aa)). Residues Glu159, Glu161, and Asp190 each contribute to the Mg(2+) site.

Belongs to the FAH family. Mg(2+) is required as a cofactor. Requires Mn(2+) as cofactor.

It is found in the mitochondrion. It carries out the reaction oxaloacetate = enol-oxaloacetate. Tautomerase that converts enol-oxaloacetate, a strong inhibitor of succinate dehydrogenase, to the physiological keto form of oxaloacetate. It is thereby required to maximize aerobic respiration efficiency by preventing succinate dehydrogenase inhibition. This is Oxaloacetate tautomerase FAHD2B, mitochondrial from Homo sapiens (Human).